A 235-amino-acid chain; its full sequence is Adenosine 5'-phosphosulfate reductase (235 aa).

Positions 121, 122, 204, and 207 each coordinate [4Fe-4S] cluster. Catalysis depends on Cys-230, which acts as the Nucleophile; cysteine thiosulfonate intermediate.

It belongs to the PAPS reductase family. CysH subfamily. [4Fe-4S] cluster is required as a cofactor.

Its subcellular location is the cytoplasm. It catalyses the reaction [thioredoxin]-disulfide + sulfite + AMP + 2 H(+) = adenosine 5'-phosphosulfate + [thioredoxin]-dithiol. Its pathway is sulfur metabolism; hydrogen sulfide biosynthesis; sulfite from sulfate. In terms of biological role, catalyzes the formation of sulfite from adenosine 5'-phosphosulfate (APS) using thioredoxin as an electron donor. This chain is Adenosine 5'-phosphosulfate reductase, found in Anoxybacillus flavithermus (strain DSM 21510 / WK1).